A 217-amino-acid polypeptide reads, in one-letter code: Adenylate kinase (217 aa).

ATP is bound at residue 10-15; the sequence is GAGKGT. Positions 30–59 are NMP; sequence STGDIFRKNVADDTPLGRLAKQYMDAGDLV. AMP is bound by residues Thr-31, Arg-36, 57 to 59, 85 to 88, and Gln-92; these read DLV and GFPR. An LID region spans residues 126-163; it reads GRRTCADCAHVWHVTYDPPTVDGVCDLCGGKLFQREDD. Residue Arg-127 participates in ATP binding. Zn(2+) contacts are provided by Cys-130, Cys-133, Cys-150, and Cys-153. AMP is bound by residues Arg-160 and Arg-171. Residue Gly-199 participates in ATP binding.

This sequence belongs to the adenylate kinase family. As to quaternary structure, monomer.

The protein localises to the cytoplasm. The enzyme catalyses AMP + ATP = 2 ADP. Its pathway is purine metabolism; AMP biosynthesis via salvage pathway; AMP from ADP: step 1/1. Its function is as follows. Catalyzes the reversible transfer of the terminal phosphate group between ATP and AMP. Plays an important role in cellular energy homeostasis and in adenine nucleotide metabolism. The protein is Adenylate kinase of Acidothermus cellulolyticus (strain ATCC 43068 / DSM 8971 / 11B).